The primary structure comprises 317 residues: Protein phosphatase 1 regulatory subunit 3C (317 aa).

Residues 84 to 87 (RVVF) carry the PP1-binding motif motif. Positions 141–263 (PSSDYLSFRD…YRIVHVQWKP (123 aa)) are interaction with EPM2A. Residues 149–257 (RDRFQKNFVC…NNEAQNYRIV (109 aa)) form the CBM21 domain.

In terms of assembly, interacts with PPP1CC catalytic subunit of PP1 and associates with glycogen. Forms complexes with glycogen phosphorylase, glycogen synthase and phosphorylase kinase which is necessary for its regulation of PP1 activity. Also interacts with EPM2A/laforin. Post-translationally, ubiquitinated by NHLRC1/malin in a EPM2A/laforin-dependent manner.

Acts as a glycogen-targeting subunit for PP1 and regulates its activity. Activates glycogen synthase, reduces glycogen phosphorylase activity and limits glycogen breakdown. Dramatically increases basal and insulin-stimulated glycogen synthesis upon overexpression in a variety of cell types. This is Protein phosphatase 1 regulatory subunit 3C from Rattus norvegicus (Rat).